A 234-amino-acid chain; its full sequence is Lipoprotein-releasing system ATP-binding protein LolD (234 aa).

Positions isoleucine 13–leucine 233 constitute an ABC transporter domain. Residue alanine 49–serine 56 participates in ATP binding.

This sequence belongs to the ABC transporter superfamily. Lipoprotein translocase (TC 3.A.1.125) family. The complex is composed of two ATP-binding proteins (LolD) and two transmembrane proteins (LolC and LolE).

The protein resides in the cell inner membrane. Its function is as follows. Part of the ABC transporter complex LolCDE involved in the translocation of mature outer membrane-directed lipoproteins, from the inner membrane to the periplasmic chaperone, LolA. Responsible for the formation of the LolA-lipoprotein complex in an ATP-dependent manner. The protein is Lipoprotein-releasing system ATP-binding protein LolD of Bradyrhizobium diazoefficiens (strain JCM 10833 / BCRC 13528 / IAM 13628 / NBRC 14792 / USDA 110).